A 342-amino-acid chain; its full sequence is Polyprenyl transferase trt2 (342 aa).

Transmembrane regions (helical) follow at residues Val-71–Leu-91, Ile-95–Ile-115, Ala-141–Ser-161, Cys-163–Phe-183, Pro-187–Val-207, Thr-216–Cys-236, Leu-261–Val-278, Leu-282–Val-304, and Ala-319–Leu-339.

This sequence belongs to the UbiA prenyltransferase family. The cofactor is Mg(2+).

Its subcellular location is the membrane. The enzyme catalyses 3,5-dimethylorsellinate + (2E,6E)-farnesyl diphosphate = (3R)-3-farnesyl-6-hydroxy-2,3,5-trimethyl-4-oxocyclohexa-1,5-diene-1-carboxylate + diphosphate + H(+). Its pathway is secondary metabolite biosynthesis; terpenoid biosynthesis. Its function is as follows. Polyprenyl transferase; part of the gene cluster that mediates the biosynthesis of terretonin, a fungal meroterpenoid that acts as a mycotoxin. The first step of the pathway is the synthesis of 3,5-dimethylorsellinic acid (DMOA) by the polyketide synthase trt4. DMOA is then prenylated into farnesyl-DMOA by the polyprenyl transferase trt2. Methylation by the methyltransferase trt5 then leads to farnesyl-DMOA methyl ester which is further subject to epoxidation by the FAD-dependent monooxygenase trt8 to yield epoxyfarnesyl-DMOA methyl ester. Cyclization of epoxyfarnesyl-DMOA methyl ester by the terpene cyclase trt1 leads to a tetracycle intermediate which is in turn converted to preterretonin. Dehydrogenase trt9 comes next to transform preterretonin to preterrenoid. The FAD-dependent monooxygenase trt3 is then required for the C-hydroxylation at C16 of preterrenoid to yield terrenoid. The cytochrome P450 trt6 catalyzes three successive oxidations to transform terrenoid into an unstable intermediate, which then undergoes the D-ring expansion and unusual rearrangement of the methoxy group to afford the core skeleton of terretonin. Trt14 catalyzes the D-ring expansion of terretonin involving intramolecular methoxy rearrangement as well as the hydrolysis of the expanded D-ring and the methyl ester moiety. Finally, the nonheme iron-dependent dioxygenase trt7 accomplishes the last two oxidation reactions steps to complete the biosynthesis of terretonin. Terretonin C is produced via spontaneous decarboxylation of the terretonin precursor. Another shunt product of the terretonin biosynthesis is dihydrofarnesyl-DMOA, derived from epoxyfarnesyl-DMOA through hydrolysis of the epoxide. The protein is Polyprenyl transferase trt2 of Aspergillus terreus (strain NIH 2624 / FGSC A1156).